We begin with the raw amino-acid sequence, 29 residues long: Cytochrome b6-f complex subunit 8 (29 aa).

Residues 3–23 (IVGIAWAALMVVFTFSLSLVV) form a helical membrane-spanning segment.

It belongs to the PetN family. The 4 large subunits of the cytochrome b6-f complex are cytochrome b6, subunit IV (17 kDa polypeptide, PetD), cytochrome f and the Rieske protein, while the 4 small subunits are PetG, PetL, PetM and PetN. The complex functions as a dimer.

The protein resides in the plastid. Its subcellular location is the chloroplast thylakoid membrane. Functionally, component of the cytochrome b6-f complex, which mediates electron transfer between photosystem II (PSII) and photosystem I (PSI), cyclic electron flow around PSI, and state transitions. The sequence is that of Cytochrome b6-f complex subunit 8 from Cryptomeria japonica (Japanese cedar).